Here is a 352-residue protein sequence, read N- to C-terminus: Maleylacetate reductase (352 aa).

This sequence belongs to the iron-containing alcohol dehydrogenase family.

The catalysed reaction is 3-oxoadipate + NAD(+) = maleylacetate + NADH + H(+). The enzyme catalyses 3-oxoadipate + NADP(+) = maleylacetate + NADPH + H(+). It functions in the pathway aromatic compound metabolism; 3-chlorocatechol degradation. This chain is Maleylacetate reductase (clcE), found in Pseudomonas knackmussii (strain DSM 6978 / CCUG 54928 / LMG 23759 / B13).